The primary structure comprises 467 residues: Indoleacetamide hydrolase (467 aa).

Active-site charge relay system residues include K74 and S149. Catalysis depends on S173, which acts as the Acyl-ester intermediate.

It belongs to the amidase family.

It participates in plant hormone metabolism; auxin biosynthesis. Its function is as follows. Hydrolyzes indole-3-acetamide (IAM) into indole-3-acetic acid (IAA). The chain is Indoleacetamide hydrolase (tms2) from Rhizobium radiobacter (Agrobacterium tumefaciens).